Reading from the N-terminus, the 274-residue chain is Pantothenate synthetase (274 aa).

26-33 (MGNLHAGH) is a binding site for ATP. The active-site Proton donor is histidine 33. Glutamine 57 is a binding site for (R)-pantoate. Glutamine 57 contacts beta-alanine. Residue 143–146 (GKKD) participates in ATP binding. Glutamine 149 contacts (R)-pantoate. Residues valine 172 and 180–183 (LSSR) each bind ATP.

The protein belongs to the pantothenate synthetase family. As to quaternary structure, homodimer.

Its subcellular location is the cytoplasm. It catalyses the reaction (R)-pantoate + beta-alanine + ATP = (R)-pantothenate + AMP + diphosphate + H(+). Its pathway is cofactor biosynthesis; (R)-pantothenate biosynthesis; (R)-pantothenate from (R)-pantoate and beta-alanine: step 1/1. In terms of biological role, catalyzes the condensation of pantoate with beta-alanine in an ATP-dependent reaction via a pantoyl-adenylate intermediate. The polypeptide is Pantothenate synthetase (Dechloromonas aromatica (strain RCB)).